A 250-amino-acid polypeptide reads, in one-letter code: 3alpha-hydroxysteroid dehydrogenase (250 aa).

Positions 93, 158, and 162 each coordinate NADP(+). Catalysis depends on Y158, which acts as the Proton acceptor.

Belongs to the short-chain dehydrogenases/reductases (SDR) family.

It carries out the reaction lithocholate + NADP(+) = 3-oxo-5beta-cholan-24-oate + NADPH + H(+). It catalyses the reaction deoxycholate + NADP(+) = 12alpha-hydroxy-3-oxo-5beta-cholan-24-oate + NADPH + H(+). The enzyme catalyses deoxycholate + NAD(+) = 12alpha-hydroxy-3-oxo-5beta-cholan-24-oate + NADH + H(+). The catalysed reaction is cholate + NADP(+) = 7alpha,12alpha-dihydroxy-3-oxo-5beta-cholan-24-oate + NADPH + H(+). It carries out the reaction chenodeoxycholate + NADP(+) = 3-oxochenodeoxycholate + NADPH + H(+). Involved in the modification of secondary bile acids into iso-bile acids (3beta-bile acids) via epimerization of the 3-OH group through a 3-oxo-intermediate. Catalyzes the oxidation of deoxycholate (DCA) and lithocholate (LCA) to yield 12-alpha-hydroxy-3-oxo-5-beta-cholan-24-oate (3-oxo-DCA) and 3-oxo-5-beta-cholan-24-oate (3-oxo-LCA), respectively. Is also able to catalyze the oxidation of cholate (CA) and chenodeoxycholate (CDCA) into 3-dehydrocholate (3-oxo-CA) and 7-alpha-hydroxy-3-oxo-5-beta-cholan-24-oate (3-oxo-CDCA), respectively. Can also catalyze the reverse reactions in vitro. Accepts both NADPH and NADH as cosubstrates. The conversion of the abundant bile acid DCA into isoDCA by the gut bacterium R.gnavus favors the growth of the keystone commensal genus Bacteroides, since isoDCA is less cytotoxic than its parent compound, DCA; iso-bile acids have thus a potential role in modulating gut community composition. The sequence is that of 3alpha-hydroxysteroid dehydrogenase from Mediterraneibacter gnavus (strain ATCC 29149 / DSM 114966 / JCM 6515 / VPI C7-9) (Ruminococcus gnavus).